The primary structure comprises 490 residues: Betaine aldehyde dehydrogenase (490 aa).

K(+) is bound by residues threonine 26, isoleucine 27, and aspartate 93. NAD(+) is bound at residue 150–152 (GAW). The active-site Charge relay system is lysine 162. Residue 176-179 (KPSE) participates in NAD(+) binding. Valine 180 serves as a coordination point for K(+). 230 to 233 (GVAS) is an NAD(+) binding site. Leucine 246 lines the K(+) pocket. Glutamate 252 acts as the Proton acceptor in catalysis. Glycine 254, cysteine 286, and glutamate 387 together coordinate NAD(+). Catalysis depends on cysteine 286, which acts as the Nucleophile. Residue cysteine 286 is modified to Cysteine sulfenic acid (-SOH). K(+) is bound by residues lysine 457 and glycine 460. Glutamate 464 functions as the Charge relay system in the catalytic mechanism.

Belongs to the aldehyde dehydrogenase family. In terms of assembly, dimer of dimers. K(+) serves as cofactor.

The catalysed reaction is betaine aldehyde + NAD(+) + H2O = glycine betaine + NADH + 2 H(+). The protein operates within amine and polyamine biosynthesis; betaine biosynthesis via choline pathway; betaine from betaine aldehyde: step 1/1. Its function is as follows. Involved in the biosynthesis of the osmoprotectant glycine betaine. Catalyzes the irreversible oxidation of betaine aldehyde to the corresponding acid. This chain is Betaine aldehyde dehydrogenase, found in Escherichia coli O139:H28 (strain E24377A / ETEC).